The sequence spans 107 residues: Nucleoid-associated protein RC1337 (107 aa).

This sequence belongs to the YbaB/EbfC family. In terms of assembly, homodimer.

It localises to the cytoplasm. The protein localises to the nucleoid. In terms of biological role, binds to DNA and alters its conformation. May be involved in regulation of gene expression, nucleoid organization and DNA protection. This Rickettsia conorii (strain ATCC VR-613 / Malish 7) protein is Nucleoid-associated protein RC1337.